Consider the following 494-residue polypeptide: Cobyrinate a,c-diamide synthase (494 aa).

One can recognise a GATase cobBQ-type domain in the interval 270–475; the sequence is KIGVALDEAF…AHLHGVAYRE (206 aa). Residue C352 is the Nucleophile of the active site.

This sequence belongs to the CobB/CbiA family. Requires Mg(2+) as cofactor.

The enzyme catalyses cob(II)yrinate + 2 L-glutamine + 2 ATP + 2 H2O = cob(II)yrinate a,c diamide + 2 L-glutamate + 2 ADP + 2 phosphate + 2 H(+). It carries out the reaction Ni-sirohydrochlorin + 2 L-glutamine + 2 ATP + 2 H2O = Ni-sirohydrochlorin a,c-diamide + 2 L-glutamate + 2 ADP + 2 phosphate + 2 H(+). The protein operates within cofactor biosynthesis; adenosylcobalamin biosynthesis; cob(II)yrinate a,c-diamide from sirohydrochlorin (anaerobic route): step 10/10. Its function is as follows. Catalyzes the ATP-dependent amidation of the two carboxylate groups at positions a and c of cobyrinate, using either L-glutamine or ammonia as the nitrogen source (Potential). Involved in the biosynthesis of the unique nickel-containing tetrapyrrole coenzyme F430, the prosthetic group of methyl-coenzyme M reductase (MCR), which plays a key role in methanogenesis and anaerobic methane oxidation. Catalyzes the ATP-dependent amidation of the two carboxylate groups at positions a and c of Ni-sirohydrochlorin, using L-glutamine or ammonia as the nitrogen source. Also able to use sirohydrochlorin as substrate, but only produces a monoamide species in a much slower reaction. Unable to use other metallosirohydrochlorins such as sirohaem and Co-sirohydrochlorin. This Methanosarcina barkeri (strain Fusaro / DSM 804) protein is Cobyrinate a,c-diamide synthase.